The chain runs to 307 residues: 4-hydroxythreonine-4-phosphate dehydrogenase (307 aa).

Substrate contacts are provided by histidine 121 and threonine 122. A divalent metal cation is bound by residues histidine 150, histidine 189, and histidine 245. Substrate-binding residues include lysine 253, asparagine 262, and arginine 271.

Belongs to the PdxA family. As to quaternary structure, homodimer. Zn(2+) is required as a cofactor. Mg(2+) serves as cofactor. It depends on Co(2+) as a cofactor.

The protein resides in the cytoplasm. It carries out the reaction 4-(phosphooxy)-L-threonine + NAD(+) = 3-amino-2-oxopropyl phosphate + CO2 + NADH. Its pathway is cofactor biosynthesis; pyridoxine 5'-phosphate biosynthesis; pyridoxine 5'-phosphate from D-erythrose 4-phosphate: step 4/5. Functionally, catalyzes the NAD(P)-dependent oxidation of 4-(phosphooxy)-L-threonine (HTP) into 2-amino-3-oxo-4-(phosphooxy)butyric acid which spontaneously decarboxylates to form 3-amino-2-oxopropyl phosphate (AHAP). The chain is 4-hydroxythreonine-4-phosphate dehydrogenase from Sulfurimonas denitrificans (strain ATCC 33889 / DSM 1251) (Thiomicrospira denitrificans (strain ATCC 33889 / DSM 1251)).